A 343-amino-acid polypeptide reads, in one-letter code: N-acetyl-gamma-glutamyl-phosphate reductase (343 aa).

The active site involves Cys-147.

The protein belongs to the NAGSA dehydrogenase family. Type 1 subfamily.

Its subcellular location is the cytoplasm. It catalyses the reaction N-acetyl-L-glutamate 5-semialdehyde + phosphate + NADP(+) = N-acetyl-L-glutamyl 5-phosphate + NADPH + H(+). It participates in amino-acid biosynthesis; L-arginine biosynthesis; N(2)-acetyl-L-ornithine from L-glutamate: step 3/4. In terms of biological role, catalyzes the NADPH-dependent reduction of N-acetyl-5-glutamyl phosphate to yield N-acetyl-L-glutamate 5-semialdehyde. This is N-acetyl-gamma-glutamyl-phosphate reductase from Listeria monocytogenes serotype 4b (strain F2365).